A 505-amino-acid polypeptide reads, in one-letter code: Flagellin (505 aa).

It belongs to the bacterial flagellin family.

It localises to the secreted. The protein resides in the bacterial flagellum. Functionally, flagellin is the subunit protein which polymerizes to form the filaments of bacterial flagella. This is Flagellin (fliC) from Salmonella derby.